The sequence spans 141 residues: MEIRVFQQSDFEEVILLWEHCDLLRPWNDPEMDIERKLNHDPELFLVAEVSGAIVGSVMGGYDGHRGSAYYLGVHPDFRGRGFANALISRLEKKLIARGCPKLNIMVREDNDAVIGMYEKLDYETQDTIMLGKRLIVDQEY.

The N-acetyltransferase domain occupies 1–141; that stretch reads MEIRVFQQSD…GKRLIVDQEY (141 aa).

Belongs to the acetyltransferase family. YpeA subfamily.

The sequence is that of Acetyltransferase YE1169 from Yersinia enterocolitica serotype O:8 / biotype 1B (strain NCTC 13174 / 8081).